Consider the following 90-residue polypeptide: MSVKIRLTRMGSKKKPFYRINVADSRAPRDGKFIETVGTYNPLLTENQVTLKEERVLEWLSNGAQPSDTVRNLLSKAGVMKKFHESKLSK.

It belongs to the bacterial ribosomal protein bS16 family.

The protein is Small ribosomal subunit protein bS16 of Lactococcus lactis subsp. cremoris (strain SK11).